The following is a 209-amino-acid chain: MSLNQIQRACFCSGGVKKKKKPKYRFGFPMALYFFFEKLNFSYWTSTTVNPNHYVCVLPSEAGQALASVLGGELFLAKSQLVEATAFDLTGQGAEAGDLLVFLRNNGVVLSYSFYFFLLKKRITFFLHGGDKVSSLESFYSNANWLEREISEMFRGSNLLKKESRNLLLDYGSSFNPFLKKFPSTGHAEVVFNSFLKTTAYVQTAGVEL.

The protein belongs to the complex I 30 kDa subunit family. As to quaternary structure, complex I is composed of about 30 different subunits.

It is found in the mitochondrion inner membrane. The enzyme catalyses a ubiquinone + NADH + 5 H(+)(in) = a ubiquinol + NAD(+) + 4 H(+)(out). Core subunit of the mitochondrial membrane respiratory chain NADH dehydrogenase (Complex I) that is believed to belong to the minimal assembly required for catalysis. Complex I functions in the transfer of electrons from NADH to the respiratory chain. The immediate electron acceptor for the enzyme is believed to be ubiquinone. The chain is NADH-ubiquinone oxidoreductase subunit 9 (NAD9) from Paramecium tetraurelia.